The primary structure comprises 334 residues: Mitochondrial glycine transporter (334 aa).

Solcar repeat units follow at residues 22-106, 135-219, and 237-321; these read SKTT…LRQG, LSNW…LKRR, and SSSS…LILR. Helical transmembrane passes span 28–53, 81–107, 141–166, 194–217, 241–267, and 296–314; these read FVAG…TRVQ, GTLP…RQGI, LATG…VRYE, GFGA…EQLK, INFV…KTRL, and GLGL…AWTV.

It belongs to the mitochondrial carrier (TC 2.A.29) family. SLC25A38 subfamily.

It localises to the mitochondrion inner membrane. It catalyses the reaction glycine(in) = glycine(out). In terms of biological role, mitochondrial glycine transporter that imports glycine into the mitochondrial matrix. Plays an important role in providing glycine for the first enzymatic step in heme biosynthesis, the condensation of glycine with succinyl-CoA to produce 5-aminolevulinate (ALA) in the mitochondrial matrix. This is Mitochondrial glycine transporter from Aspergillus clavatus (strain ATCC 1007 / CBS 513.65 / DSM 816 / NCTC 3887 / NRRL 1 / QM 1276 / 107).